The primary structure comprises 373 residues: Mitochondrial nicotinamide adenine dinucleotide transporter 1 (373 aa).

Residues 1-80 lie on the Mitochondrial matrix side of the membrane; the sequence is MTQTDNPVPN…WVPLSSTQIT (80 aa). Solcar repeat units follow at residues 75-166, 174-263, and 276-364; these read SSTQ…SKKF, FDFV…LKVR, and INLQ…FRNR. The helical transmembrane segment at 81–101 threads the bilayer; the sequence is ALSGAFAGFLSGVAVCPLDVA. The Mitochondrial intermembrane segment spans residues 102–141; sequence KTRLQAQGLQTRFENPYYRGIMGTLSTIVRDEGPRGLYKG. A helical membrane pass occupies residues 142-162; sequence LVPIVLGYFPTWMIYFSVYEF. Residues 163 to 176 lie on the Mitochondrial matrix side of the membrane; sequence SKKFFHGIFPQFDF. A helical transmembrane segment spans residues 177–199; that stretch reads VAQSCAAITAGAASTTLTNPIWV. Topologically, residues 200 to 235 are mitochondrial intermembrane; it reads VKTRLMLQSNLGEHPTHYKGTFDAFRKLFYQEGFKA. Residues 236–256 form a helical membrane-spanning segment; that stretch reads LYAGLVPSLLGLFHVAIHFPI. The Mitochondrial matrix segment spans residues 257 to 280; the sequence is YEDLKVRFHCYSRENNTNSINLQR. A helical transmembrane segment spans residues 281–297; the sequence is LIMASSVSKMIASAVTY. The Mitochondrial intermembrane segment spans residues 298 to 335; sequence PHEILRTRMQLKSDIPDSIQRRLFPLIKATYAQEGLKG. Residues 336–358 form a helical membrane-spanning segment; sequence FYSGFTTNLVRTIPASAITLVSF. The Mitochondrial matrix portion of the chain corresponds to 359-373; that stretch reads EYFRNRLENISTMVI.

The protein belongs to the mitochondrial carrier (TC 2.A.29) family.

It is found in the mitochondrion inner membrane. The enzyme catalyses dAMP(in) + NAD(+)(out) = dAMP(out) + NAD(+)(in). It catalyses the reaction dGMP(in) + NAD(+)(out) = dGMP(out) + NAD(+)(in). The catalysed reaction is GMP(in) + NAD(+)(out) = GMP(out) + NAD(+)(in). It carries out the reaction AMP(in) + NAD(+)(out) = AMP(out) + NAD(+)(in). The enzyme catalyses deamido-NAD(+)(in) + NAD(+)(out) = deamido-NAD(+)(out) + NAD(+)(in). In terms of biological role, mitochondrial inner membrane carrier protein that mediates the import of NAD(+) into mitochondria. Can transport NAD(+) by unidirectional transport or by exchange with intramitochondrially generated dAMP and dGMP. Also able to transport NAD(+) by exchange with AMP, GMP or deamido-NAD (+) in vitro. This Saccharomyces cerevisiae (strain ATCC 204508 / S288c) (Baker's yeast) protein is Mitochondrial nicotinamide adenine dinucleotide transporter 1 (YIA6).